A 202-amino-acid polypeptide reads, in one-letter code: Small ribosomal subunit protein uS4c (202 aa).

Positions 90–153 constitute an S4 RNA-binding domain; that stretch reads MRLDNVIFRL…KSETIISKNI (64 aa).

It belongs to the universal ribosomal protein uS4 family. As to quaternary structure, part of the 30S ribosomal subunit. Contacts protein S5. The interaction surface between S4 and S5 is involved in control of translational fidelity.

It is found in the plastid. The protein resides in the chloroplast. Its function is as follows. One of the primary rRNA binding proteins, it binds directly to 16S rRNA where it nucleates assembly of the body of the 30S subunit. In terms of biological role, with S5 and S12 plays an important role in translational accuracy. This Arbusculohypopterygium arbuscula (Moss) protein is Small ribosomal subunit protein uS4c (rps4).